The primary structure comprises 224 residues: PKHD-type hydroxylase Sbal195_0750 (224 aa).

Residues 78–176 (QFYPPLFNRY…RTAAFMWLQS (99 aa)) enclose the Fe2OG dioxygenase domain. 3 residues coordinate Fe cation: histidine 96, aspartate 98, and histidine 157. Arginine 167 is a binding site for 2-oxoglutarate.

Requires Fe(2+) as cofactor. The cofactor is L-ascorbate.

This chain is PKHD-type hydroxylase Sbal195_0750, found in Shewanella baltica (strain OS195).